A 186-amino-acid polypeptide reads, in one-letter code: uncharacterized protein (186 aa).

Positions methionine 1–glycine 18 are cleaved as a signal peptide. Cysteine 19 is lipidated: N-palmitoyl cysteine. A lipid anchor (S-diacylglycerol cysteine) is attached at cysteine 19.

Its subcellular location is the cell membrane. This is an uncharacterized protein from Salmonella typhimurium (strain LT2 / SGSC1412 / ATCC 700720).